Consider the following 142-residue polypeptide: Group IIE secretory phospholipase A2 (142 aa).

An N-terminal signal peptide occupies residues 1–19 (MKPPIALACLCLLVPLAGG). Asp-41, Gly-43, Tyr-45, Gly-47, and Gly-49 together coordinate Ca(2+). Cystine bridges form between Cys-44–Cys-135, Cys-46–Cys-62, Cys-61–Cys-115, Cys-67–Cys-142, Cys-68–Cys-108, Cys-77–Cys-101, and Cys-95–Cys-106. His-65 is a catalytic residue. Residue Asp-66 participates in Ca(2+) binding. Residue Asp-109 is part of the active site. Tyr-130 and Asn-132 together coordinate Ca(2+).

The protein belongs to the phospholipase A2 family. The cofactor is Ca(2+). As to expression, highly expressed in skin and uterus, and at lower levels in various other tissues. Expressed in hair follicles, specifically localized in companion cells of the outer root sheath and cuticular cells of the inner root sheath in hair follicles during anagen. Expressed in white and brown adipose tissue.

It is found in the secreted. The protein localises to the cytoplasm. It catalyses the reaction a 1,2-diacyl-sn-glycero-3-phosphoethanolamine + H2O = a 1-acyl-sn-glycero-3-phosphoethanolamine + a fatty acid + H(+). It carries out the reaction 1-hexadecanoyl-2-(9Z-octadecenoyl)-sn-glycero-3-phosphoethanolamine + H2O = 1-hexadecanoyl-sn-glycero-3-phosphoethanolamine + (9Z)-octadecenoate + H(+). The catalysed reaction is 1-hexadecanoyl-2-(9Z,12Z-octadecadienoyl)-sn-glycero-3-phosphoethanolamine + H2O = 1-hexadecanoyl-sn-glycero-3-phosphoethanolamine + (9Z,12Z)-octadecadienoate + H(+). The enzyme catalyses 1-hexadecanoyl-2-(5Z,8Z,11Z,14Z-eicosatetraenoyl)-sn-glycero-3-phosphoethanolamine + H2O = 1-hexadecanoyl-sn-glycero-3-phosphoethanolamine + (5Z,8Z,11Z,14Z)-eicosatetraenoate + H(+). It catalyses the reaction 1,2-dihexadecanoyl-sn-glycero-3-phospho-(1'-sn-glycerol) + H2O = 1-hexadecanoyl-sn-glycero-3-phospho-(1'-sn-glycerol) + hexadecanoate + H(+). It carries out the reaction 1-hexadecanoyl-2-(9Z-octadecenoyl)-sn-glycero-3-phosphoglycerol + H2O = 1-hexadecanoyl-sn-glycero-3-phosphoglycerol + (9Z)-octadecenoate + H(+). The catalysed reaction is a 1,2-diacyl-sn-glycero-3-phosphocholine + H2O = a 1-acyl-sn-glycero-3-phosphocholine + a fatty acid + H(+). The enzyme catalyses 1,2-dihexadecanoyl-sn-glycero-3-phosphocholine + H2O = 1-hexadecanoyl-sn-glycero-3-phosphocholine + hexadecanoate + H(+). It catalyses the reaction 1-hexadecanoyl-2-(9Z-octadecenoyl)-sn-glycero-3-phosphocholine + H2O = 1-hexadecanoyl-sn-glycero-3-phosphocholine + (9Z)-octadecenoate + H(+). It carries out the reaction 1-hexadecanoyl-2-(9Z,12Z-octadecadienoyl)-sn-glycero-3-phosphocholine + H2O = (9Z,12Z)-octadecadienoate + 1-hexadecanoyl-sn-glycero-3-phosphocholine + H(+). The catalysed reaction is 1-hexadecanoyl-2-(4Z,7Z,10Z,13Z,16Z,19Z-docosahexaenoyl)-sn-glycero-3-phosphocholine + H2O = (4Z,7Z,10Z,13Z,16Z,19Z)-docosahexaenoate + 1-hexadecanoyl-sn-glycero-3-phosphocholine + H(+). Secretory calcium-dependent phospholipase A2 that primarily targets extracellular phospholipids. Hydrolyzes the ester bond of the fatty acyl group attached at sn-2 position of phospholipids (phospholipase A2 activity), releasing various unsaturated fatty acids including oleoate, linoleoate, arachidonate, docosahexaenoate and lysophosphatidylethanolamines in preference to lysophosphatidylcholines. In response to high-fat diet, hydrolyzes minor lipoprotein phospholipids including phosphatidylserines, phosphatidylinositols and phosphatidylglycerols, altering lipoprotein composition and fat storage in adipose tissue and liver. May act in an autocrine and paracrine manner. Contributes to lipid remodeling of cellular membranes and generation of lipid mediators involved in pathogen clearance. Cleaves sn-2 fatty acyl chains of phosphatidylglycerols and phosphatidylethanolamines, which are major components of membrane phospholipids in bacteria. Acts as a hair follicle phospholipase A2. Selectively releases lysophosphatidylethanolamines (LPE) and various unsaturated fatty acids in skin to regulate hair follicle homeostasis. May regulate the inflammatory response by releasing arachidonate, a precursor of prostaglandins and leukotrienes. Upon allergen exposure, may participate in allergic inflammatory response by enhancing leukotriene C4 synthesis and degranulation in mast cells. The polypeptide is Group IIE secretory phospholipase A2 (Pla2g2e) (Mus musculus (Mouse)).